Reading from the N-terminus, the 275-residue chain is Nurim (275 aa).

Over 1 to 4 (MASV) the chain is Nuclear. The helical transmembrane segment at 5 to 32 (TFRDGFLCVSALITFVFVFVTGADFVRF) threads the bilayer. The Perinuclear space portion of the chain corresponds to 33 to 63 (VSFRAINHNLSGAAPLCRDSVPWSVALRDGV). The chain crosses the membrane as a helical span at residues 64–85 (VQKAVAVDVLLLVVFSLQHSLL). The Nuclear segment spans residues 86–102 (AWTPVKRVCQSVFGVLS). A helical transmembrane segment spans residues 103-119 (RSVYCFTTAAALQILMH). The Perinuclear space segment spans residues 120 to 138 (YWRPVTSAPCLWSVSSAPW). Residues 139–169 (EIWFPLICFIVHFLCWAIICSILLIFDYPEL) form a helical membrane-spanning segment. Residues 170–196 (LGIKQVYYECLGLGDPLLLKSERAQRL) are Nuclear-facing. Residues 197–215 (YSHLRHPVCVELLTVLWLL) traverse the membrane as a helical segment. The Perinuclear space segment spans residues 216–221 (PSFPLD). Residues 222 to 239 (RLLLAVFLTVYLILAHSL) form a helical membrane-spanning segment. Residues 240 to 275 (DKQDCAYLRHQLRNKLQLFSTPLEGSEQTNDNNKLE) lie on the Nuclear side of the membrane.

This sequence belongs to the nurim family.

It is found in the nucleus inner membrane. This is Nurim (nrm) from Danio rerio (Zebrafish).